A 514-amino-acid chain; its full sequence is MSQAATPAADGKVKISIDPLTRVEGHLKIEVEVKDGKVVDAKCSGGMFRGFEQILRGRDPRDSSQIVQRICGVCPTAHCTASVMAQDDAFGVKVTTNGRITRNLIFGANYLQSHILHFYHLAALDYVKGPDVSPFVPRYANADLLTDRIKDGAKADATNTYGLNQYLKALEIRRICHEMVAMFGGRMPHVQGMVVGGATEIPTADKVAEYAARFKEVQKFVIEEYLPLIYTLGSVYTDLFETGIGWKNVIAFGVFPEDDDYKTFLLKPGVYIDGKDEEFDSKLVKEYVGHSFFDHSAPGGLHYSVGETNPNPDKPGAYSFVKAPRYKDKPCEVGPLARMWVQNPELSPVGQKLLKELYGIEAKKFRDLGDKAFSIMGRHVLVAEETWLTAVAVEKWLKQVQPGAETYVKSEIPDAAEGTGFTEAPRGALLHYLKIKDKKIENYQIVSATLWNANPRDDMGQRGPIEEALIGVPVPDIKNPVNVGRLVRSYDPULGCAVHVLHAETGEEHVVNID.

Residue Glu52 coordinates Fe cation. The Ni(2+) site is built by Cys71 and Cys74. Residues Cys74 and Ile445 each contribute to the Fe cation site. Ni(2+)-binding residues include Sec493 and Cys496. Sec493 is a non-standard amino acid (selenocysteine). Positions 496 and 499 each coordinate Fe cation.

Belongs to the [NiFe]/[NiFeSe] hydrogenase large subunit family. As to quaternary structure, heterodimer of a large and a small subunit. Fe cation is required as a cofactor. It depends on Ni(2+) as a cofactor.

It is found in the periplasm. It carries out the reaction H2 + A = AH2. This Desulfomicrobium baculatum (Desulfovibrio baculatus) protein is Periplasmic [NiFeSe] hydrogenase large subunit.